A 333-amino-acid polypeptide reads, in one-letter code: 6-phosphogluconolactonase (333 aa).

It belongs to the cycloisomerase 2 family.

It catalyses the reaction 6-phospho-D-glucono-1,5-lactone + H2O = 6-phospho-D-gluconate + H(+). It participates in carbohydrate degradation; pentose phosphate pathway; D-ribulose 5-phosphate from D-glucose 6-phosphate (oxidative stage): step 2/3. Its function is as follows. Catalyzes the hydrolysis of 6-phosphogluconolactone to 6-phosphogluconate. This chain is 6-phosphogluconolactonase, found in Yersinia enterocolitica serotype O:8 / biotype 1B (strain NCTC 13174 / 8081).